The following is a 468-amino-acid chain: Soluble pyridine nucleotide transhydrogenase (468 aa).

36–45 (ERYKNVGGGC) contacts FAD.

The protein belongs to the class-I pyridine nucleotide-disulfide oxidoreductase family. FAD serves as cofactor.

It localises to the cytoplasm. It catalyses the reaction NAD(+) + NADPH = NADH + NADP(+). In terms of biological role, conversion of NADPH, generated by peripheral catabolic pathways, to NADH, which can enter the respiratory chain for energy generation. The polypeptide is Soluble pyridine nucleotide transhydrogenase (Hamiltonella defensa subsp. Acyrthosiphon pisum (strain 5AT)).